The primary structure comprises 323 residues: Small ribosomal subunit protein uS2 (323 aa).

The disordered stretch occupies residues 295–323; that stretch reads VVNRDRAGFNKKQPKAEEAAKPAEKKAEK.

Belongs to the universal ribosomal protein uS2 family.

The protein is Small ribosomal subunit protein uS2 of Mycoplasmoides gallisepticum (strain R(low / passage 15 / clone 2)) (Mycoplasma gallisepticum).